Consider the following 120-residue polypeptide: MITKPNKNAGRKKRHAHVRRTLSGTPQRPRLNVFRSSKHIYAQLIDDVNGVTLAQASTLDKELGLENGGNKEAARKVGELVGKRAVDAGFESVVFDRGGYLYHGRIAELADGAREAGLKF.

The segment at 1–29 (MITKPNKNAGRKKRHAHVRRTLSGTPQRP) is disordered. Over residues 9-20 (AGRKKRHAHVRR) the composition is skewed to basic residues.

This sequence belongs to the universal ribosomal protein uL18 family. Part of the 50S ribosomal subunit; part of the 5S rRNA/L5/L18/L25 subcomplex. Contacts the 5S and 23S rRNAs.

This is one of the proteins that bind and probably mediate the attachment of the 5S RNA into the large ribosomal subunit, where it forms part of the central protuberance. The polypeptide is Large ribosomal subunit protein uL18 (Shouchella clausii (strain KSM-K16) (Alkalihalobacillus clausii)).